The following is a 116-amino-acid chain: Large ribosomal subunit protein uL22 (116 aa).

Belongs to the universal ribosomal protein uL22 family. As to quaternary structure, part of the 50S ribosomal subunit.

Functionally, this protein binds specifically to 23S rRNA; its binding is stimulated by other ribosomal proteins, e.g. L4, L17, and L20. It is important during the early stages of 50S assembly. It makes multiple contacts with different domains of the 23S rRNA in the assembled 50S subunit and ribosome. The globular domain of the protein is located near the polypeptide exit tunnel on the outside of the subunit, while an extended beta-hairpin is found that lines the wall of the exit tunnel in the center of the 70S ribosome. The sequence is that of Large ribosomal subunit protein uL22 from Sulfurihydrogenibium sp. (strain YO3AOP1).